The following is an 874-amino-acid chain: Alanine--tRNA ligase (874 aa).

Residues His564, His568, Cys665, and His669 each coordinate Zn(2+).

The protein belongs to the class-II aminoacyl-tRNA synthetase family. Requires Zn(2+) as cofactor.

It is found in the cytoplasm. The enzyme catalyses tRNA(Ala) + L-alanine + ATP = L-alanyl-tRNA(Ala) + AMP + diphosphate. Functionally, catalyzes the attachment of alanine to tRNA(Ala) in a two-step reaction: alanine is first activated by ATP to form Ala-AMP and then transferred to the acceptor end of tRNA(Ala). Also edits incorrectly charged Ser-tRNA(Ala) and Gly-tRNA(Ala) via its editing domain. This is Alanine--tRNA ligase from Paraburkholderia xenovorans (strain LB400).